Reading from the N-terminus, the 199-residue chain is Ribonuclease HII (199 aa).

The RNase H type-2 domain occupies 13–199 (GLVAGVDEVG…FAPIAKILCG (187 aa)). Residues D19, E20, and D110 each contribute to the a divalent metal cation site.

The protein belongs to the RNase HII family. Mn(2+) serves as cofactor. The cofactor is Mg(2+).

It localises to the cytoplasm. The enzyme catalyses Endonucleolytic cleavage to 5'-phosphomonoester.. Endonuclease that specifically degrades the RNA of RNA-DNA hybrids. The chain is Ribonuclease HII from Jannaschia sp. (strain CCS1).